The chain runs to 175 residues: NADH-ubiquinone oxidoreductase chain 6 (175 aa).

5 consecutive transmembrane segments (helical) span residues 1 to 21, 25 to 45, 47 to 67, 88 to 108, and 149 to 169; these read MMTY…VGFA, SPIY…AIVL, FGGS…MLVV, AVLA…CYIL, and YGTW…LVIM.

The protein belongs to the complex I subunit 6 family. In terms of assembly, core subunit of respiratory chain NADH dehydrogenase (Complex I) which is composed of 45 different subunits.

The protein resides in the mitochondrion inner membrane. It catalyses the reaction a ubiquinone + NADH + 5 H(+)(in) = a ubiquinol + NAD(+) + 4 H(+)(out). Core subunit of the mitochondrial membrane respiratory chain NADH dehydrogenase (Complex I) which catalyzes electron transfer from NADH through the respiratory chain, using ubiquinone as an electron acceptor. Essential for the catalytic activity and assembly of complex I. This Canis lupus familiaris (Dog) protein is NADH-ubiquinone oxidoreductase chain 6 (MT-ND6).